The sequence spans 688 residues: Probable xyloglucan glycosyltransferase 7 (688 aa).

Positions 1 to 25 are disordered; sequence MAPSWWGRSGGGGVGNGGGTPVVVK. A compositionally biased stretch (gly residues) spans 8–20; that stretch reads RSGGGGVGNGGGT. The next 2 helical transmembrane spans lie at 121 to 141 and 183 to 203; these read VSLV…LQGW and VALF…CFWI. Asp269 is a catalytic residue. 2 residues coordinate substrate: Asp328 and Asp330. The active site involves Asp422. 2 helical membrane-spanning segments follow: residues 500-520 and 525-545; these read LILP…TMFV and LPAW…ILPA. A disordered region spans residues 604–635; sequence HSKQQRVGSAPNLDALTKEESNPKKDSKKKKH. Residues 619–628 show a composition bias toward basic and acidic residues; that stretch reads LTKEESNPKK. The next 2 helical transmembrane spans lie at 638–657 and 663–683; these read IYRK…ARSL and IHFY…LDLI.

This sequence belongs to the glycosyltransferase 2 family. Plant cellulose synthase-like C subfamily.

It is found in the golgi apparatus membrane. Functionally, probable beta-1,4-glucan synthase rather involved in the synthesis of the xyloglucan backbone than cellulose. Seems to work simultaneously with xyloglucan 6-xylosyltransferase. Xyloglucan is a noncellulosic polysaccharides of plant cell wall and consists of a glucan backbone substituted by xylose, galactose and fucose. This is Probable xyloglucan glycosyltransferase 7 (CSLC7) from Oryza sativa subsp. japonica (Rice).